Here is a 513-residue protein sequence, read N- to C-terminus: GMP synthase [glutamine-hydrolyzing] (513 aa).

A Glutamine amidotransferase type-1 domain is found at Lys8–Asn198. Catalysis depends on Cys85, which acts as the Nucleophile. Active-site residues include His172 and Glu174. Residues Trp199 to Arg388 enclose the GMPS ATP-PPase domain. Ser226 to Ser232 is an ATP binding site.

As to quaternary structure, homodimer.

It catalyses the reaction XMP + L-glutamine + ATP + H2O = GMP + L-glutamate + AMP + diphosphate + 2 H(+). Its pathway is purine metabolism; GMP biosynthesis; GMP from XMP (L-Gln route): step 1/1. Its function is as follows. Catalyzes the synthesis of GMP from XMP. The polypeptide is GMP synthase [glutamine-hydrolyzing] (guaA) (Lactococcus lactis subsp. cremoris (strain MG1363)).